Consider the following 676-residue polypeptide: GRB2-associated-binding protein 2 (676 aa).

Ser-2 bears the Phosphoserine mark. Residues 6 to 117 (DVVCTGWLRK…WVQSICQICG (112 aa)) form the PH domain. The tract at residues 127 to 178 (SLRNVSSAGHGPRSSPAELSSSSQHLLRERKSSAPSHSSQPTLFTFEPPVSN) is disordered. 11 positions are modified to phosphoserine: Ser-133, Ser-140, Ser-141, Ser-148, Ser-149, Ser-159, Ser-164, Ser-210, Ser-218, Ser-223, and Ser-264. A compositionally biased stretch (low complexity) spans 140–149 (SSPAELSSSS). Residues 159–169 (SAPSHSSQPTL) show a composition bias toward polar residues. Thr-265 carries the post-translational modification Phosphothreonine. Tyr-266 bears the Phosphotyrosine mark. Thr-278 is subject to Phosphothreonine. A phosphoserine mark is found at Ser-281 and Ser-285. Thr-287 bears the Phosphothreonine mark. A Phosphotyrosine modification is found at Tyr-293. Thr-331 is subject to Phosphothreonine. The tract at residues 341 to 430 (VATPGDSAIA…RSAESMSDGV (90 aa)) is disordered. The SH3-binding motif lies at 351–358 (PPPRPPKP). Ser-368 bears the Phosphoserine mark. Thr-385 and Thr-391 each carry phosphothreonine. Ser-405 bears the Phosphoserine mark. Phosphothreonine is present on Thr-408. Residues Ser-422 and Ser-425 each carry the phosphoserine modification. Tyr-452 bears the Phosphotyrosine mark. Ser-480 carries the post-translational modification Phosphoserine. The interval 492 to 531 (PSTTLPVHRGPSRGSEIQPPPVNRNLKPDRKAKPTPLDLR) is disordered. The short motif at 510-519 (PPPVNRNLKP) is the SH3-binding element. Ser-543 bears the Phosphoserine mark. Composition is skewed to polar residues over residues 556 to 577 (FNSSSSQYCRPISTQSITSTDS) and 589 to 611 (NPVSASPVPSGTNSPAPKKSTGS). Disordered regions lie at residues 556-643 (FNSS…KVDY) and 656-676 (NTMQEWTDVRQSSEPSKGAKL). Ser-622 and Ser-623 each carry phosphoserine. Residue Tyr-643 is modified to Phosphotyrosine. A compositionally biased stretch (polar residues) spans 656–670 (NTMQEWTDVRQSSEP).

Belongs to the GAB family. Part of a complex composed of EEIG1, TNFRSF11A/RANK, PLCG2, GAB2, TEC and BTK; complex formation increases in the presence of TNFSF11/RANKL. Interacts with SHC1; may mediate interaction with receptors. Interacts with SYK. Interacts with PI-3 kinase. Interacts with GRB2 (via SH3 2 domain). Interacts (phosphorylated) with PTPN11. Interacts with TNFRSF11A (via cytoplasmic domain). Interacts (phosphorylated) with 14-3-3 family proteins SFN, YWHAB, YWHAE, YWHAG, YWHAH, YWHAQ and YWHAZ; prevents interaction with GRB2 and attenuates GAB2 signaling. Interacts with HCK. Phosphorylated on tyrosine residue(s) by the thrombopoietin receptor (TPOR), stem cell factor receptor (SCFR), and T-cell and B-cell antigen receptors, gp130, IL-2R and IL-3R. Phosphorylated upon stimulation of TNFRSF11A/RANK by TNFSF11/RANKL. Phosphorylated upon EGF stimulation. Phosphorylated on tyrosine residues by HCK upon IL6 signaling. In terms of processing, dephosphorylated by PTPN11.

It localises to the cytoplasm. Its subcellular location is the cell membrane. The protein localises to the membrane raft. Adapter protein which acts downstream of several membrane receptors including cytokine, antigen, hormone, cell matrix and growth factor receptors to regulate multiple signaling pathways. Regulates osteoclast differentiation mediating the TNFRSF11A/RANK signaling. In allergic response, it plays a role in mast cells activation and degranulation through PI-3-kinase regulation. Also involved in the regulation of cell proliferation and hematopoiesis. This chain is GRB2-associated-binding protein 2 (GAB2), found in Homo sapiens (Human).